Here is a 358-residue protein sequence, read N- to C-terminus: DNA polymerase IV (358 aa).

The UmuC domain occupies 4-185 (IIHIDMDCYF…LSLRKIPGVG (182 aa)). Residues aspartate 8 and aspartate 103 each contribute to the Mg(2+) site. The active site involves glutamate 104.

This sequence belongs to the DNA polymerase type-Y family. As to quaternary structure, monomer. It depends on Mg(2+) as a cofactor.

Its subcellular location is the cytoplasm. The catalysed reaction is DNA(n) + a 2'-deoxyribonucleoside 5'-triphosphate = DNA(n+1) + diphosphate. In terms of biological role, poorly processive, error-prone DNA polymerase involved in untargeted mutagenesis. Copies undamaged DNA at stalled replication forks, which arise in vivo from mismatched or misaligned primer ends. These misaligned primers can be extended by PolIV. Exhibits no 3'-5' exonuclease (proofreading) activity. May be involved in translesional synthesis, in conjunction with the beta clamp from PolIII. This chain is DNA polymerase IV, found in Shewanella baltica (strain OS195).